Reading from the N-terminus, the 200-residue chain is ATP synthase subunit b 2 (200 aa).

Residues 1-16 (MAEQNILTTPSPNADT) show a composition bias toward polar residues. The segment at 1-38 (MAEQNILTTPSPNADTTIVPPGSPHTHTEQPSGGHGGA) is disordered. Residues 46–66 (TFLAQLIWLALAFGLLYYLMS) traverse the membrane as a helical segment.

The protein belongs to the ATPase B chain family. As to quaternary structure, F-type ATPases have 2 components, F(1) - the catalytic core - and F(0) - the membrane proton channel. F(1) has five subunits: alpha(3), beta(3), gamma(1), delta(1), epsilon(1). F(0) has three main subunits: a(1), b(2) and c(10-14). The alpha and beta chains form an alternating ring which encloses part of the gamma chain. F(1) is attached to F(0) by a central stalk formed by the gamma and epsilon chains, while a peripheral stalk is formed by the delta and b chains.

The protein localises to the cell inner membrane. Functionally, f(1)F(0) ATP synthase produces ATP from ADP in the presence of a proton or sodium gradient. F-type ATPases consist of two structural domains, F(1) containing the extramembraneous catalytic core and F(0) containing the membrane proton channel, linked together by a central stalk and a peripheral stalk. During catalysis, ATP synthesis in the catalytic domain of F(1) is coupled via a rotary mechanism of the central stalk subunits to proton translocation. Its function is as follows. Component of the F(0) channel, it forms part of the peripheral stalk, linking F(1) to F(0). The b'-subunit is a diverged and duplicated form of b found in plants and photosynthetic bacteria. This chain is ATP synthase subunit b 2 (atpF2), found in Methylorubrum populi (strain ATCC BAA-705 / NCIMB 13946 / BJ001) (Methylobacterium populi).